Here is a 443-residue protein sequence, read N- to C-terminus: Endoplasmic reticulum protein SC65 (443 aa).

The N-terminal stretch at M1–A18 is a signal peptide. A disordered region spans residues S81–G102. N367 carries N-linked (GlcNAc...) asparagine glycosylation. Composition is skewed to acidic residues over residues D387–P398, A407–L419, and G431–A443. A disordered region spans residues D387 to A443.

Belongs to the leprecan family. As to quaternary structure, interacts with PLOD1, P3H3 and PPIB. Identified in a complex with PLOD1 and P3H3. Found in testis, brain, heart and at a much lower level in liver.

It is found in the endoplasmic reticulum. Functionally, part of a complex composed of PLOD1, P3H3 and P3H4 that catalyzes hydroxylation of lysine residues in collagen alpha chains and is required for normal assembly and cross-linking of collagen fibrils. Required for normal bone density and normal skin stability via its role in hydroxylation of lysine residues in collagen alpha chains and in collagen fibril assembly. This chain is Endoplasmic reticulum protein SC65, found in Rattus norvegicus (Rat).